Reading from the N-terminus, the 180-residue chain is tRNA (cytidine(56)-2'-O)-methyltransferase (180 aa).

S-adenosyl-L-methionine-binding positions include Leu84 and 112 to 116; that span reads GAEKV.

It belongs to the aTrm56 family. In terms of assembly, homodimer.

The protein localises to the cytoplasm. The enzyme catalyses cytidine(56) in tRNA + S-adenosyl-L-methionine = 2'-O-methylcytidine(56) in tRNA + S-adenosyl-L-homocysteine + H(+). Its function is as follows. Specifically catalyzes the AdoMet-dependent 2'-O-ribose methylation of cytidine at position 56 in tRNAs. The protein is tRNA (cytidine(56)-2'-O)-methyltransferase of Haloarcula marismortui (strain ATCC 43049 / DSM 3752 / JCM 8966 / VKM B-1809) (Halobacterium marismortui).